Reading from the N-terminus, the 332-residue chain is Glycerol-3-phosphate dehydrogenase [NAD(P)+] (332 aa).

NADPH-binding residues include serine 11, tryptophan 12, lysine 32, and lysine 106. Sn-glycerol 3-phosphate-binding residues include lysine 106, glycine 137, and serine 139. Residue alanine 141 participates in NADPH binding. Positions 192, 245, 255, 256, and 257 each coordinate sn-glycerol 3-phosphate. Lysine 192 serves as the catalytic Proton acceptor. Arginine 256 provides a ligand contact to NADPH. NADPH contacts are provided by valine 280 and glutamate 282.

Belongs to the NAD-dependent glycerol-3-phosphate dehydrogenase family.

The protein localises to the cytoplasm. It carries out the reaction sn-glycerol 3-phosphate + NAD(+) = dihydroxyacetone phosphate + NADH + H(+). The enzyme catalyses sn-glycerol 3-phosphate + NADP(+) = dihydroxyacetone phosphate + NADPH + H(+). It participates in membrane lipid metabolism; glycerophospholipid metabolism. In terms of biological role, catalyzes the reduction of the glycolytic intermediate dihydroxyacetone phosphate (DHAP) to sn-glycerol 3-phosphate (G3P), the key precursor for phospholipid synthesis. The chain is Glycerol-3-phosphate dehydrogenase [NAD(P)+] from Macrococcus caseolyticus (strain JCSC5402) (Macrococcoides caseolyticum).